The sequence spans 337 residues: Fructose-1,6-bisphosphatase class 1 (337 aa).

4 residues coordinate Mg(2+): E92, D114, L116, and D117. Substrate is bound by residues 117–120 (DGSS), N209, and K275. Residue E281 coordinates Mg(2+).

The protein belongs to the FBPase class 1 family. Homotetramer. Requires Mg(2+) as cofactor.

It is found in the cytoplasm. The enzyme catalyses beta-D-fructose 1,6-bisphosphate + H2O = beta-D-fructose 6-phosphate + phosphate. It functions in the pathway carbohydrate biosynthesis; gluconeogenesis. This chain is Fructose-1,6-bisphosphatase class 1, found in Thiobacillus denitrificans (strain ATCC 25259 / T1).